A 96-amino-acid chain; its full sequence is DVSGTVCLSALPPEATDTLNLIASDGPFPYSQDGVVFQNRESVLPTQSYGYYHEYTVITPGARTRGTRRIITGEATQEDYYTGDHYATFSLIDQTC.

Cys-7 and Cys-96 form a disulfide bridge. Glu-54 serves as the catalytic Proton acceptor. Catalysis depends on His-85, which acts as the Proton donor.

It belongs to the ribonuclease N1/T1 family.

It localises to the secreted. It carries out the reaction [RNA] containing guanosine + H2O = an [RNA fragment]-3'-guanosine-3'-phosphate + a 5'-hydroxy-ribonucleotide-3'-[RNA fragment].. This Kitasatospora aureofaciens (Streptomyces aureofaciens) protein is Guanyl-specific ribonuclease Sa (rnaSA).